An 872-amino-acid chain; its full sequence is N-acetyltransferase eso1 (872 aa).

The interval 1 to 591 (MELGKSKFSW…KQVKPKTYGR (591 aa)) is polymerase type-Y. Residues 29–285 (VAHIDQDAFY…LKITDIRMLG (257 aa)) enclose the UmuC domain. The UBZ3-type zinc-finger motif lies at 533–567 (SADETYTCEECEQKITLSERNEHEDYHIALSISRK). Positions 540, 543, 555, and 559 each coordinate Zn(2+). The tract at residues 569-602 (RYNNLVPPSHDKPKQVKPKTYGRKTGSKHYAPLS) is disordered. A compositionally biased stretch (basic residues) spans 583 to 595 (QVKPKTYGRKTGS). The segment at 592-872 (KTGSKHYAPL…KSLRYAVYES (281 aa)) is acetyltransferase. The segment at 653–677 (VTCSECSMEYNSTSEEDILLHSRFH) adopts a CCHH-type zinc-finger fold.

It in the C-terminal section; belongs to the acetyltransferase family. ECO subfamily. In the N-terminal section; belongs to the DNA polymerase type-Y family. In terms of assembly, interacts with pds5.

It is found in the nucleus. Functionally, probable acetyltransferase required for the establishment of sister chromatid cohesion and couple the processes of cohesion and DNA replication to ensure that only sister chromatids become paired together. In contrast to the structural cohesins, the deposition and establishment factors are required only during S phase. The relevance of acetyltransferase function remains unclear. In Schizosaccharomyces pombe (strain 972 / ATCC 24843) (Fission yeast), this protein is N-acetyltransferase eso1 (eso1).